The primary structure comprises 397 residues: Phosphoglycerate kinase (397 aa).

Substrate-binding positions include 21-23 (DFN), Arg37, 60-63 (HLGR), Arg119, and Arg152. Residues Lys203, Gly294, Glu325, and 354-357 (GGDS) each bind ATP.

This sequence belongs to the phosphoglycerate kinase family. In terms of assembly, monomer.

It localises to the cytoplasm. It carries out the reaction (2R)-3-phosphoglycerate + ATP = (2R)-3-phospho-glyceroyl phosphate + ADP. It functions in the pathway carbohydrate degradation; glycolysis; pyruvate from D-glyceraldehyde 3-phosphate: step 2/5. The chain is Phosphoglycerate kinase from Pelodictyon phaeoclathratiforme (strain DSM 5477 / BU-1).